The following is an 85-amino-acid chain: Large ribosomal subunit protein bL27 (85 aa).

Positions 1–20 (MATKKAGGSTRNGRDSEAKR) are disordered.

This sequence belongs to the bacterial ribosomal protein bL27 family.

In Actinobacillus pleuropneumoniae serotype 5b (strain L20), this protein is Large ribosomal subunit protein bL27.